We begin with the raw amino-acid sequence, 744 residues long: CCR4-NOT transcription complex subunit 10 (744 aa).

The segment covering 1–16 has biased composition (basic and acidic residues); sequence MAADKPADQGAEKHEG. The interval 1–25 is disordered; it reads MAADKPADQGAEKHEGTGQSSGITD. Alanine 2 is subject to N-acetylalanine. The stretch at 74-107 forms a coiled coil; it reads KSNQTTTDNLRQTLNQLKNQVHSAVEEMDGLDDV. Low complexity predominate over residues 183 to 199; the sequence is NNNKNGKNETGNNNNKD. Disordered regions lie at residues 183–204, 477–521, and 602–634; these read NNNK…SNHK, QDPK…PPSS, and VSLG…PQCY. Polar residues predominate over residues 484–495; sequence GAKNSNQLGGNT. The span at 496-506 shows a compositional bias: low complexity; sequence ESSESSETCSS. A compositionally biased stretch (polar residues) spans 602-612; that stretch reads VSLGISSNEQD.

This sequence belongs to the CNOT10 family. In terms of assembly, component of the CCR4-NOT complex; distinct complexes seem to exist that differ in the participation of probably mutually exclusive catalytic subunits. CNOT10 and CNOT11 form a subcomplex docked to the CNOT1 scaffold.

The protein localises to the cytoplasm. It localises to the nucleus. Its function is as follows. Component of the CCR4-NOT complex which is one of the major cellular mRNA deadenylases and is linked to various cellular processes including bulk mRNA degradation, miRNA-mediated repression, translational repression during translational initiation and general transcription regulation. Additional complex functions may be a consequence of its influence on mRNA expression. Is not required for association of CNOT7 to the CCR4-NOT complex. The sequence is that of CCR4-NOT transcription complex subunit 10 (CNOT10) from Macaca fascicularis (Crab-eating macaque).